A 363-amino-acid chain; its full sequence is Spindle pole body component SPC42 (363 aa).

Residues 62 to 136 (INKAVQQNKE…DANSTFKEMR (75 aa)) adopt a coiled-coil conformation. Residues 160–184 (PKHRAPDATGNPRTTNKVSNTSDQD) form a disordered region. A compositionally biased stretch (polar residues) spans 170 to 182 (NPRTTNKVSNTSD). A phosphoserine mark is found at Ser213, Ser217, Ser284, and Ser329. A coiled-coil region spans residues 248-297 (DDIMMYESAELKRVEEEIEELKRKILVRKKHDLRKLSLNNQLQELQSMMD). Residues 310–363 (HNHATHRHSSQSSRDYSPSSDACLECSNDLYEKNRVKPENNMSETFATPTPNNR) are disordered. Low complexity predominate over residues 319–329 (SQSSRDYSPSS). Residues 349 to 363 (NNMSETFATPTPNNR) show a composition bias toward polar residues.

The protein belongs to the SPC42 family. In terms of assembly, component of the SPC110 complex containing at least CMD1, SPC29, SPC42 and SCP110.

It localises to the nucleus. Its subcellular location is the cytoplasm. The protein resides in the cytoskeleton. The protein localises to the microtubule organizing center. It is found in the spindle pole body. In terms of biological role, forms a polymeric layer at the periphery of the spindle pole body (SPB) central plaque which has an essential function during SPB duplication and may facilitate attachment of the SPB to the nuclear membrane. The protein is Spindle pole body component SPC42 (SPC42) of Saccharomyces cerevisiae (strain RM11-1a) (Baker's yeast).